The sequence spans 258 residues: Type III pantothenate kinase (258 aa).

Residue 6–13 (DVGNTNIV) participates in ATP binding. Substrate contacts are provided by residues Tyr100 and 107 to 110 (GADR). Asp109 acts as the Proton acceptor in catalysis. A K(+)-binding site is contributed by Asp129. Residue Thr132 coordinates ATP. Thr184 lines the substrate pocket.

This sequence belongs to the type III pantothenate kinase family. In terms of assembly, homodimer. The cofactor is NH4(+). K(+) is required as a cofactor.

It localises to the cytoplasm. The enzyme catalyses (R)-pantothenate + ATP = (R)-4'-phosphopantothenate + ADP + H(+). It functions in the pathway cofactor biosynthesis; coenzyme A biosynthesis; CoA from (R)-pantothenate: step 1/5. Its function is as follows. Catalyzes the phosphorylation of pantothenate (Pan), the first step in CoA biosynthesis. This is Type III pantothenate kinase from Desulfitobacterium hafniense (strain DSM 10664 / DCB-2).